Here is a 118-residue protein sequence, read N- to C-terminus: Na(+)/H(+) antiporter subunit G1 (118 aa).

The next 3 helical transmembrane spans lie at 9–29, 41–61, and 70–90; these read IALI…IGIL, AGKA…LFFI, and QLIV…HLII.

Belongs to the CPA3 antiporters (TC 2.A.63) subunit G family. May form a heterooligomeric complex that consists of seven subunits: mnhA1, mnhB1, mnhC1, mnhD1, mnhE1, mnhF1 and mnhG1.

The protein localises to the cell membrane. Its function is as follows. Mnh complex is a Na(+)/H(+) antiporter involved in Na(+) excretion. The chain is Na(+)/H(+) antiporter subunit G1 (mnhG1) from Staphylococcus saprophyticus subsp. saprophyticus (strain ATCC 15305 / DSM 20229 / NCIMB 8711 / NCTC 7292 / S-41).